Consider the following 296-residue polypeptide: Light-independent protochlorophyllide reductase iron-sulfur ATP-binding protein (296 aa).

ATP contacts are provided by residues 39–44 and Lys-68; that span reads GIGKST. A Mg(2+)-binding site is contributed by Ser-43. 2 residues coordinate [4Fe-4S] cluster: Cys-124 and Cys-158. 209 to 210 contacts ATP; it reads NR.

It belongs to the NifH/BchL/ChlL family. In terms of assembly, homodimer. Protochlorophyllide reductase is composed of three subunits; ChlL, ChlN and ChlB. The cofactor is [4Fe-4S] cluster.

It carries out the reaction chlorophyllide a + oxidized 2[4Fe-4S]-[ferredoxin] + 2 ADP + 2 phosphate = protochlorophyllide a + reduced 2[4Fe-4S]-[ferredoxin] + 2 ATP + 2 H2O. It functions in the pathway porphyrin-containing compound metabolism; chlorophyll biosynthesis (light-independent). Functionally, component of the dark-operative protochlorophyllide reductase (DPOR) that uses Mg-ATP and reduced ferredoxin to reduce ring D of protochlorophyllide (Pchlide) to form chlorophyllide a (Chlide). This reaction is light-independent. The L component serves as a unique electron donor to the NB-component of the complex, and binds Mg-ATP. This is Light-independent protochlorophyllide reductase iron-sulfur ATP-binding protein from Synechococcus sp. (strain CC9605).